The chain runs to 210 residues: Guanylate kinase (210 aa).

Residues 6-186 enclose the Guanylate kinase-like domain; it reads GVILVLSSPS…TADRISNILR (181 aa). An ATP-binding site is contributed by 13 to 20; sequence SPSGCGKT.

It belongs to the guanylate kinase family.

The protein localises to the cytoplasm. It carries out the reaction GMP + ATP = GDP + ADP. Essential for recycling GMP and indirectly, cGMP. This chain is Guanylate kinase, found in Anaplasma phagocytophilum (strain HZ).